A 1458-amino-acid chain; its full sequence is Probable serine/threonine-protein kinase yakA (1458 aa).

Residues 32–76 (NNSLNSNDNTNTTNNNNNNNNNNNNNNNNNNNNNNNNNINNNNNN) show a composition bias toward low complexity. The tract at residues 32–83 (NNSLNSNDNTNTTNNNNNNNNNNNNNNNNNNNNNNNNNINNNNNNGGMVGVN) is disordered. A Protein kinase domain is found at 205-548 (YKVLDSLGQG…PMQAKEHPFI (344 aa)). ATP-binding positions include 211–219 (LGQGTFGQV) and Lys234. The Proton acceptor role is filled by Asp332. 2 disordered regions span residues 441 to 462 (HRHL…NGKP) and 545 to 571 (HPFI…TYSQ). A compositionally biased stretch (low complexity) spans 446-459 (SNSDDNNNNNNNNN). The stretch at 588-643 (NQHQLFQQLQQQQQQQQQQQQQQQQQQQQQQQQQQQQQQHNQFQQQQQQQQQQQQS) forms a coiled coil. Low complexity-rich tracts occupy residues 659-709 (TPYT…SFNF), 791-800 (SWGSDSSSIS), 808-853 (QKQM…NNVN), and 861-870 (DIPSDSFSSS). 2 disordered regions span residues 659 to 714 (TPYT…NESF) and 791 to 874 (SWGS…EGMD). Positions 878–927 (NLYQQQQQQQQQQQQQQQQQQQQQQQQQQQQQQQQQQLQYQQQFQTLQDL) form a coiled coil. Disordered regions lie at residues 930 to 1095 (EGEK…PQMI), 1128 to 1161 (NQQN…GGAI), 1233 to 1347 (DYRP…SYQY), 1375 to 1399 (QQQQ…KTSS), and 1435 to 1458 (QQLQ…YRET). 3 stretches are compositionally biased toward low complexity: residues 961–988 (QQTN…QQQQ), 1016–1042 (QQFQ…RFMQ), and 1064–1093 (QPLH…FTPQ). 2 stretches are compositionally biased toward polar residues: residues 1128–1158 (NQQN…NSSG) and 1233–1245 (DYRP…QSPP). Low complexity-rich tracts occupy residues 1246–1255 (SSYNSNKSFY) and 1264–1279 (NNNN…NFSN). Residues 1280–1291 (SLLPSQQQNVIF) show a composition bias toward polar residues. A compositionally biased stretch (low complexity) spans 1292–1309 (PQNSPPSSYNSSNSLSKS). Polar residues-rich tracts occupy residues 1310–1321 (GGNTVKNNSNTG) and 1331–1344 (QRFN…SGGS). Coiled coils occupy residues 1346–1383 (QYQQ…KKDT) and 1409–1442 (RYQY…QQQA).

This sequence belongs to the protein kinase superfamily. CMGC Ser/Thr protein kinase family. MNB/DYRK subfamily.

The protein resides in the cytoplasm. The enzyme catalyses L-seryl-[protein] + ATP = O-phospho-L-seryl-[protein] + ADP + H(+). It catalyses the reaction L-threonyl-[protein] + ATP = O-phospho-L-threonyl-[protein] + ADP + H(+). It carries out the reaction L-tyrosyl-[protein] + ATP = O-phospho-L-tyrosyl-[protein] + ADP + H(+). Functionally, general sensor of environmental conditions, such as heat stress, effecting changes through pkaC. Essential for survival to nitrosoative and oxidative stresses. Required for cell cycle control, not only at the onset but also during development (aggregation process and postaggregative development). This Dictyostelium discoideum (Social amoeba) protein is Probable serine/threonine-protein kinase yakA (yakA).